The following is a 495-amino-acid chain: Cobyric acid synthase (495 aa).

A GATase cobBQ-type domain is found at 252 to 440; it reads RPKVVVLAYP…VHGLFADDGL (189 aa). Cysteine 334 serves as the catalytic Nucleophile. Histidine 432 is an active-site residue.

This sequence belongs to the CobB/CobQ family. CobQ subfamily.

It participates in cofactor biosynthesis; adenosylcobalamin biosynthesis. Its function is as follows. Catalyzes amidations at positions B, D, E, and G on adenosylcobyrinic A,C-diamide. NH(2) groups are provided by glutamine, and one molecule of ATP is hydrogenolyzed for each amidation. The sequence is that of Cobyric acid synthase from Bradyrhizobium sp. (strain ORS 278).